A 165-amino-acid polypeptide reads, in one-letter code: Chorismate pyruvate-lyase (165 aa).

The substrate site is built by M35, R77, L115, and E156.

It belongs to the UbiC family. As to quaternary structure, monomer.

Its subcellular location is the cytoplasm. The enzyme catalyses chorismate = 4-hydroxybenzoate + pyruvate. It functions in the pathway cofactor biosynthesis; ubiquinone biosynthesis. In terms of biological role, removes the pyruvyl group from chorismate, with concomitant aromatization of the ring, to provide 4-hydroxybenzoate (4HB) for the ubiquinone pathway. In Salmonella agona (strain SL483), this protein is Chorismate pyruvate-lyase.